The chain runs to 229 residues: Potassium/proton antiporter CemA (229 aa).

The next 3 helical transmembrane spans lie at 7-27, 106-126, and 189-209; these read LNPL…SLSF, IILH…YSIL, and IISG…KYWI.

The protein belongs to the CemA family.

Its subcellular location is the plastid. The protein resides in the chloroplast inner membrane. It carries out the reaction K(+)(in) + H(+)(out) = K(+)(out) + H(+)(in). Functionally, contributes to K(+)/H(+) antiport activity by supporting proton efflux to control proton extrusion and homeostasis in chloroplasts in a light-dependent manner to modulate photosynthesis. Prevents excessive induction of non-photochemical quenching (NPQ) under continuous-light conditions. Indirectly promotes efficient inorganic carbon uptake into chloroplasts. The protein is Potassium/proton antiporter CemA of Nymphaea alba (White water-lily).